A 505-amino-acid chain; its full sequence is Histidine ammonia-lyase (505 aa).

A cross-link (5-imidazolinone (Ala-Gly)) is located at residues 141 to 143 (ASG). Position 142 is a 2,3-didehydroalanine (Ser) (Ser142).

This sequence belongs to the PAL/histidase family. In terms of processing, contains an active site 4-methylidene-imidazol-5-one (MIO), which is formed autocatalytically by cyclization and dehydration of residues Ala-Ser-Gly.

Its subcellular location is the cytoplasm. The catalysed reaction is L-histidine = trans-urocanate + NH4(+). Its pathway is amino-acid degradation; L-histidine degradation into L-glutamate; N-formimidoyl-L-glutamate from L-histidine: step 1/3. This Bacillus mycoides (strain KBAB4) (Bacillus weihenstephanensis) protein is Histidine ammonia-lyase.